Here is an 81-residue protein sequence, read N- to C-terminus: Acyl carrier protein (81 aa).

The Carrier domain occupies 2-77 (ASIEERVVDI…EAIDFIEKEK (76 aa)). Ser37 carries the post-translational modification O-(pantetheine 4'-phosphoryl)serine.

It belongs to the acyl carrier protein (ACP) family. 4'-phosphopantetheine is transferred from CoA to a specific serine of apo-ACP by AcpS. This modification is essential for activity because fatty acids are bound in thioester linkage to the sulfhydryl of the prosthetic group.

It localises to the cytoplasm. It functions in the pathway lipid metabolism; fatty acid biosynthesis. Its function is as follows. Carrier of the growing fatty acid chain in fatty acid biosynthesis. This chain is Acyl carrier protein, found in Rhodopirellula baltica (strain DSM 10527 / NCIMB 13988 / SH1).